The sequence spans 156 residues: Ribosomal RNA large subunit methyltransferase H (156 aa).

S-adenosyl-L-methionine is bound by residues Leu72, Gly104, and 123–128 (FGAMVW).

It belongs to the RNA methyltransferase RlmH family. Homodimer.

The protein localises to the cytoplasm. The catalysed reaction is pseudouridine(1915) in 23S rRNA + S-adenosyl-L-methionine = N(3)-methylpseudouridine(1915) in 23S rRNA + S-adenosyl-L-homocysteine + H(+). In terms of biological role, specifically methylates the pseudouridine at position 1915 (m3Psi1915) in 23S rRNA. The sequence is that of Ribosomal RNA large subunit methyltransferase H from Dinoroseobacter shibae (strain DSM 16493 / NCIMB 14021 / DFL 12).